An 847-amino-acid polypeptide reads, in one-letter code: Endo-beta-N-acetylglucosaminidase EndoSd (847 aa).

The N-terminal stretch at 1–36 is a signal peptide; it reads MDKRLLVKRTLGCVCAATLMGAILATHHDSLISVKA. Positions 65–377 constitute a GH18 domain; sequence PLYAGYFRTW…HPVVDNISHT (313 aa). Position 107 (histidine 107) interacts with a glycoprotein. Glutamate 186 acts as the Proton donor in catalysis. Residues glutamate 188, glutamine 250, tyrosine 252, glutamate 288, glutamate 289, asparagine 295, and tyrosine 339 each coordinate a glycoprotein. 4 LRR repeats span residues 423 to 446, 447 to 470, 483 to 506, and 507 to 530; these read LERYNKTLVLTVDKIHSLKGLEKL, SHLQKLELCQLSNVKEVTPDILPE, MTGLEKLNLRGLNRQTLDGIDVNG, and LTHLTSFDISHNSLDLSEKSADRK. The carbohydrate-binding module (CBM) stretch occupies residues 683 to 836; sequence MENLAKGAKV…YTELQILGQR (154 aa). The Ca(2+) site is built by lysine 704, aspartate 707, and glutamate 829.

It belongs to the glycosyl hydrolase 18 family.

Its subcellular location is the secreted. The protein resides in the host extracellular space. It catalyses the reaction an N(4)-(oligosaccharide-(1-&gt;3)-[oligosaccharide-(1-&gt;6)]-beta-D-Man-(1-&gt;4)-beta-D-GlcNAc-(1-&gt;4)-alpha-D-GlcNAc)-L-asparaginyl-[protein] + H2O = an oligosaccharide-(1-&gt;3)-[oligosaccharide-(1-&gt;6)]-beta-D-Man-(1-&gt;4)-D-GlcNAc + N(4)-(N-acetyl-beta-D-glucosaminyl)-L-asparaginyl-[protein]. In terms of biological role, endoglucosidase that acts as a host immune evasion factor by mediating hydrolysis of the N-linked glycan from the Fc region of host immunoglobulin-gamma (IgG) during infection. Specifically catalyzes the hydrolysis of the beta-1,4 linkage between the first two N-acetylglucosamine residues of the complex-type N-linked glycan located on 'Asn-297' of the Fc region of IgG antibodies (IGHG1, IGHG2, IGHG3 or IGHG4), thereby preventing interaction between IgGs and Fc receptors and ability to activate the complement pathway. Shows a specificity for biantennary complex type N-glycans; does neither cleave larger complex type glycans nor oligomannose and nor hybrid-type glycans. Specifically acts on IgGs; does not act on immunoglobulin alpha, beta, delta or mu. This chain is Endo-beta-N-acetylglucosaminidase EndoSd, found in Streptococcus dysgalactiae.